The sequence spans 113 residues: UPF0212 protein MmarC6_1165 (113 aa).

The protein belongs to the UPF0212 family.

This Methanococcus maripaludis (strain C6 / ATCC BAA-1332) protein is UPF0212 protein MmarC6_1165.